A 137-amino-acid chain; its full sequence is MEAALTKLDQEEKRALQAYYRCAWEETKNIINDFLEIPEERCTYKLNSYTKKMELLFTPEFHTAWQEVFECREFIINFLRLITGHRVVLKGPAIVFTKETKNLGIPSTINVDFQANIENMDDLQKGNLIGKMNIKEN.

It belongs to the asfivirus A137R family. As to quaternary structure, interacts with host TBK1.

The protein localises to the virion. Its subcellular location is the host cytoplasm. Plays a role in the inhibition of the host innate immune response. Mechanistically, promotes the autophagy-mediated lysosomal degradation of host TBK1 and affects IRF3 nuclear translocation to block type I IFN production. The chain is Structural protein A137R from Ornithodoros (relapsing fever ticks).